The sequence spans 276 residues: Carbonic anhydrase Nec1 (276 aa).

Positions 1 to 27 (MKMINSIFTHGSLIILLLLFHSISIKA) are cleaved as a signal peptide. Residues 34-270 (REFDYLEGSE…LNHREVQLHC (237 aa)) enclose the Alpha-carbonic anhydrase domain. Cys-59 and Cys-220 are disulfide-bonded. The active-site Proton acceptor is the His-98. Residues His-124 and His-126 each contribute to the Zn(2+) site. An N-linked (GlcNAc...) asparagine glycan is attached at Asn-134. His-143 serves as a coordination point for Zn(2+). Residues 216–217 (TT) form a substrate binding region.

It belongs to the alpha-class carbonic anhydrase family. As to quaternary structure, homodimer. It depends on Zn(2+) as a cofactor. Confined to nectaries.

It catalyses the reaction hydrogencarbonate + H(+) = CO2 + H2O. It functions in the pathway one-carbon metabolism. Involved in the production of blood-red nectar containing the alkaloid nesocodin and that serves as a visual attractant for pollinator visitation, including vertebrates such as Phelsuma geckos. The nectar is initially acidic and pale yellow, but slowly becomes alkaline before turning into red within 24 hours. Together with NEC2 and NEC3, facilitates the condensation of sinapaldehyde ((E)-3,5-dimethoxy-4-hydroxycinnamaldehyde) and proline to form nesocodin, a pigment with a stable imine bond. Mediates the alkalinization (pH increase) of the flower nectar by catalyzing the reversible hydration of carbon dioxide. The chain is Carbonic anhydrase Nec1 from Nesocodon mauritianus (Blue Mauritius bellflower).